The chain runs to 288 residues: Polyamine aminopropyltransferase (288 aa).

The region spanning 9-238 is the PABS domain; it reads ETLHDQFGQY…GIMTFAWATD (230 aa). Glutamine 33 provides a ligand contact to S-methyl-5'-thioadenosine. Spermidine is bound by residues histidine 64 and aspartate 88. Residues glutamate 108 and 140 to 141 contribute to the S-methyl-5'-thioadenosine site; that span reads DG. The active-site Proton acceptor is aspartate 158. Residue 158–161 coordinates spermidine; that stretch reads DCTD. Proline 165 contacts S-methyl-5'-thioadenosine.

It belongs to the spermidine/spermine synthase family. Homodimer or homotetramer.

It localises to the cytoplasm. The enzyme catalyses S-adenosyl 3-(methylsulfanyl)propylamine + putrescine = S-methyl-5'-thioadenosine + spermidine + H(+). Its pathway is amine and polyamine biosynthesis; spermidine biosynthesis; spermidine from putrescine: step 1/1. Functionally, catalyzes the irreversible transfer of a propylamine group from the amino donor S-adenosylmethioninamine (decarboxy-AdoMet) to putrescine (1,4-diaminobutane) to yield spermidine. This is Polyamine aminopropyltransferase from Escherichia coli (strain UTI89 / UPEC).